An 81-amino-acid polypeptide reads, in one-letter code: MSHSVKIYDTCIGCTQCVRACPTDVLEMIPWDGCKAKQIASAPRTEDCVGCKRCESACPTDFLSVRVYLWHETTRSMGLGY.

2 4Fe-4S ferredoxin-type domains span residues 2-31 and 39-68; these read SHSV…MIPW and IASA…VRVY. Residues cysteine 11, cysteine 14, cysteine 17, cysteine 21, cysteine 48, cysteine 51, cysteine 54, and cysteine 58 each coordinate [4Fe-4S] cluster.

As to quaternary structure, the eukaryotic PSI reaction center is composed of at least 11 subunits. Requires [4Fe-4S] cluster as cofactor.

The protein resides in the plastid. It localises to the chloroplast thylakoid membrane. The catalysed reaction is reduced [plastocyanin] + hnu + oxidized [2Fe-2S]-[ferredoxin] = oxidized [plastocyanin] + reduced [2Fe-2S]-[ferredoxin]. Its function is as follows. Apoprotein for the two 4Fe-4S centers FA and FB of photosystem I (PSI); essential for photochemical activity. FB is the terminal electron acceptor of PSI, donating electrons to ferredoxin. The C-terminus interacts with PsaA/B/D and helps assemble the protein into the PSI complex. Required for binding of PsaD and PsaE to PSI. PSI is a plastocyanin-ferredoxin oxidoreductase, converting photonic excitation into a charge separation, which transfers an electron from the donor P700 chlorophyll pair to the spectroscopically characterized acceptors A0, A1, FX, FA and FB in turn. The sequence is that of Photosystem I iron-sulfur center from Spinacia oleracea (Spinach).